Consider the following 412-residue polypeptide: Serine hydroxymethyltransferase (412 aa).

Residues Leu-117 and 121–123 (GHL) each bind (6S)-5,6,7,8-tetrahydrofolate. Residue Lys-226 is modified to N6-(pyridoxal phosphate)lysine.

This sequence belongs to the SHMT family. In terms of assembly, homodimer. Requires pyridoxal 5'-phosphate as cofactor.

The protein resides in the cytoplasm. The enzyme catalyses (6R)-5,10-methylene-5,6,7,8-tetrahydrofolate + glycine + H2O = (6S)-5,6,7,8-tetrahydrofolate + L-serine. It participates in one-carbon metabolism; tetrahydrofolate interconversion. It functions in the pathway amino-acid biosynthesis; glycine biosynthesis; glycine from L-serine: step 1/1. Its function is as follows. Catalyzes the reversible interconversion of serine and glycine with tetrahydrofolate (THF) serving as the one-carbon carrier. This reaction serves as the major source of one-carbon groups required for the biosynthesis of purines, thymidylate, methionine, and other important biomolecules. Also exhibits THF-independent aldolase activity toward beta-hydroxyamino acids, producing glycine and aldehydes, via a retro-aldol mechanism. This is Serine hydroxymethyltransferase from Staphylococcus aureus (strain bovine RF122 / ET3-1).